The primary structure comprises 420 residues: ATP phosphoribosyltransferase regulatory subunit (420 aa).

The protein belongs to the class-II aminoacyl-tRNA synthetase family. HisZ subfamily. As to quaternary structure, heteromultimer composed of HisG and HisZ subunits.

It localises to the cytoplasm. The protein operates within amino-acid biosynthesis; L-histidine biosynthesis; L-histidine from 5-phospho-alpha-D-ribose 1-diphosphate: step 1/9. Its function is as follows. Required for the first step of histidine biosynthesis. May allow the feedback regulation of ATP phosphoribosyltransferase activity by histidine. This Bacillus cereus (strain AH820) protein is ATP phosphoribosyltransferase regulatory subunit.